The chain runs to 24 residues: Coenzyme PQQ synthesis protein A (24 aa).

Positions 16–20 (EITMY) form a cross-link, pyrroloquinoline quinone (Glu-Tyr).

This sequence belongs to the PqqA family.

It participates in cofactor biosynthesis; pyrroloquinoline quinone biosynthesis. Its function is as follows. Required for coenzyme pyrroloquinoline quinone (PQQ) biosynthesis. PQQ is probably formed by cross-linking a specific glutamate to a specific tyrosine residue and excising these residues from the peptide. The chain is Coenzyme PQQ synthesis protein A from Cupriavidus taiwanensis (strain DSM 17343 / BCRC 17206 / CCUG 44338 / CIP 107171 / LMG 19424 / R1) (Ralstonia taiwanensis (strain LMG 19424)).